The following is a 229-amino-acid chain: Heptahelical transmembrane protein ADIPOR2 (229 aa).

At 1 to 4 (MQGA) the chain is on the cytoplasmic side. Residues 5 to 25 (ASHDAAAAAAAAAVLGGGHGV) form a helical membrane-spanning segment. The Extracellular segment spans residues 26-30 (PRWPR). The chain crosses the membrane as a helical span at residues 31 to 51 (MVFLVGAMTCLAISATAHLLA). The Cytoplasmic segment spans residues 52–66 (CHSRRASVVFWQLDY). The chain crosses the membrane as a helical span at residues 67–87 (AGISAMIVASFVPPVYYAFLC). The Extracellular portion of the chain corresponds to 88–92 (HRPAR). Residues 93-113 (VAYLSAISALGALVVGALLSP) traverse the membrane as a helical segment. The Cytoplasmic portion of the chain corresponds to 114-124 (PCSSPRFRRLR). A helical transmembrane segment spans residues 125–145 (AALFLAMGLSGVVPALHALWL). Over 146 to 153 (NWGHAACY) the chain is Extracellular. The helical transmembrane segment at 154-174 (LALSLEVAMGLAYAAGAWFYV) threads the bilayer. At 175-194 (SRVPEKWRPGVFDVVGHSHQ) the chain is on the cytoplasmic side. The chain crosses the membrane as a helical span at residues 195 to 215 (IFHVLVLVGAVTHYVAVDVLL). The Extracellular portion of the chain corresponds to 216–229 (NWRETVAAACSATS).

Belongs to the ADIPOR family.

It localises to the membrane. May play a role in abiotic stress response. The chain is Heptahelical transmembrane protein ADIPOR2 (ADIPOR2) from Oryza sativa subsp. japonica (Rice).